A 203-amino-acid chain; its full sequence is Type III effector protein HopBF1 (203 aa).

The interval 1–23 (MFNVSNNVAPSRYQGPSSTSVTP) is disordered. ATP is bound by residues S40, Q41, K42, D107, I109, and D114. Residue D155 is part of the active site. Q157 contacts ATP.

The protein belongs to the HopBF1 family.

The protein resides in the secreted. It is found in the host cell. The catalysed reaction is L-seryl-[protein] + ATP = O-phospho-L-seryl-[protein] + ADP + H(+). Its function is as follows. Effector protein that targets and inactivates the eukaryotic molecular chaperone HSP90 during infection. HopBF1 is recognized by HSP90 as a host client. As a result, HopBF1 phosphorylates HSP90, leading to the inactivation of the HSP90 ATPase activity and chaperone function. In vitro, can phosphorylate the recombinant yeast HSP82 (HSP90) and human HSP 90-beta on Ser-108. The chain is Type III effector protein HopBF1 from Ewingella americana (strain ATCC 33852 / DSM 4580 / CCUG 14506 / JCM 5911 / LMG 7869 / NCTC 12157 / CDC 1468-78).